A 246-amino-acid chain; its full sequence is Chanoclavine-I dehydrogenase easD (246 aa).

Positions 1–20 (MASVSSKIFAITGGASGIGA) are cleaved as a signal peptide. NADP(+) is bound by residues isoleucine 18, aspartate 66, arginine 132, tyrosine 169, and lysine 173. The active-site Proton donor is tyrosine 169. Lysine 173 functions as the Lowers pKa of active site Tyr in the catalytic mechanism.

It belongs to the short-chain dehydrogenases/reductases (SDR) family. As to quaternary structure, homotetramer.

It carries out the reaction chanoclavine-I + NAD(+) = chanoclavine-I aldehyde + NADH + H(+). It functions in the pathway alkaloid biosynthesis; ergot alkaloid biosynthesis. Chanoclavine-I dehydrogenase; part of the gene cluster that mediates the biosynthesis of fungal ergot alkaloid. DmaW catalyzes the first step of ergot alkaloid biosynthesis by condensing dimethylallyl diphosphate (DMAP) and tryptophan to form 4-dimethylallyl-L-tryptophan. The second step is catalyzed by the methyltransferase easF that methylates 4-dimethylallyl-L-tryptophan in the presence of S-adenosyl-L-methionine, resulting in the formation of 4-dimethylallyl-L-abrine. The catalase easC and the FAD-dependent oxidoreductase easE then transform 4-dimethylallyl-L-abrine to chanoclavine-I which is further oxidized by easD in the presence of NAD(+), resulting in the formation of chanoclavine-I aldehyde. Chanoclavine-I aldehyde is the precursor of ergoamides and ergopeptines in Clavicipitaceae, and clavine-type alcaloids such as fumiclavine in Trichocomaceae. However, the metabolites downstream of chanoclavine-I aldehyde in Arthrodermataceae have not been identified yet. In Arthroderma benhamiae (strain ATCC MYA-4681 / CBS 112371) (Trichophyton mentagrophytes), this protein is Chanoclavine-I dehydrogenase easD.